Consider the following 656-residue polypeptide: DNA ligase (656 aa).

NAD(+) contacts are provided by residues 32–36 and 81–82; these read DAVYD and SL. Lysine 112 serves as the catalytic N6-AMP-lysine intermediate. Residues arginine 133, glutamate 167, and lysine 306 each contribute to the NAD(+) site. Positions 400, 403, 416, and 421 each coordinate Zn(2+). Positions 577 to 656 constitute a BRCT domain; the sequence is KSSSVFNNKT…ELLKRLKELD (80 aa).

It belongs to the NAD-dependent DNA ligase family. LigA subfamily. Requires Mg(2+) as cofactor. Mn(2+) is required as a cofactor.

The catalysed reaction is NAD(+) + (deoxyribonucleotide)n-3'-hydroxyl + 5'-phospho-(deoxyribonucleotide)m = (deoxyribonucleotide)n+m + AMP + beta-nicotinamide D-nucleotide.. In terms of biological role, DNA ligase that catalyzes the formation of phosphodiester linkages between 5'-phosphoryl and 3'-hydroxyl groups in double-stranded DNA using NAD as a coenzyme and as the energy source for the reaction. It is essential for DNA replication and repair of damaged DNA. The sequence is that of DNA ligase from Helicobacter pylori (strain P12).